The following is a 262-amino-acid chain: Abhydrolase domain-containing protein AKT2 (262 aa).

Positions 260-262 (SKL) match the Peroxisomal targeting signal type 1 motif.

Belongs to the AB hydrolase superfamily. AKT2 hydrolase family.

It is found in the peroxisome. It functions in the pathway mycotoxin biosynthesis. In terms of biological role, abhydrolase domain-containing protein; part of the gene clusters that mediate the biosynthesis of the host-selective toxins (HSTs) AK-toxins responsible for Japanese pear black spot disease by the Japanese pear pathotype. AK-toxins are esters of 9,10-epoxy 8-hydroxy 9-methyldecatrienoic acid (EDA). On cellular level, AK-toxins affect plasma membrane of susceptible cells and cause a sudden increase in loss of K(+) after a few minutes of toxin treatment. The acyl-CoA ligase AKT1, the hydrolase AKT2 and enoyl-CoA hydratase AKT3 are all involved in the biosynthesis of the AK-, AF- and ACT-toxin common 9,10-epoxy-8-hydroxy-9-methyl-decatrienoic acid (EDA) structural moiety. Part of the EDA biosynthesis occurs in the peroxisome since these 3 enzymes are localized in peroxisomes. The exact roles of the 3 enzymes, as well as of additional AK-toxin clusters enzymes, including AKT4, AKT6 and AKTS1, have still to be elucidated. The Cytochrome P450 monooxygenase AKT7 on the other side functions to limit production of EDA and AK-toxin, probably via the catalysis of a side reaction of EDA or its precursor. The sequence is that of Abhydrolase domain-containing protein AKT2 from Alternaria alternata (Alternaria rot fungus).